We begin with the raw amino-acid sequence, 209 residues long: Casparian strip membrane protein 1 (209 aa).

Residues Met-1–Gly-46 lie on the Cytoplasmic side of the membrane. A helical membrane pass occupies residues Ile-47–Val-67. Residues Ala-68–Thr-96 lie on the Extracellular side of the membrane. The helical transmembrane segment at Phe-97–Ile-117 threads the bilayer. Topologically, residues Val-118 to Arg-129 are cytoplasmic. The chain crosses the membrane as a helical span at residues Leu-130–Ser-150. The Extracellular portion of the chain corresponds to Ala-151–Arg-179. A helical transmembrane segment spans residues Val-180–Leu-200. Topologically, residues Ser-201–His-209 are cytoplasmic.

Belongs to the Casparian strip membrane proteins (CASP) family. Homodimer and heterodimers.

The protein localises to the cell membrane. Regulates membrane-cell wall junctions and localized cell wall deposition. Required for establishment of the Casparian strip membrane domain (CSD) and the subsequent formation of Casparian strips, a cell wall modification of the root endodermis that determines an apoplastic barrier between the intraorganismal apoplasm and the extraorganismal apoplasm and prevents lateral diffusion. The sequence is that of Casparian strip membrane protein 1 from Nicotiana tabacum (Common tobacco).